The sequence spans 709 residues: Peptidoglycan D,D-transpeptidase FtsI homolog (709 aa).

The helical transmembrane segment at 20 to 42 (LQGIYYAFLSISTMIKIALDPYS) threads the bilayer. Catalysis depends on Ser341, which acts as the Acyl-ester intermediate.

Belongs to the transpeptidase family.

It localises to the plastid. The protein localises to the chloroplast membrane. The catalysed reaction is Preferential cleavage: (Ac)2-L-Lys-D-Ala-|-D-Ala. Also transpeptidation of peptidyl-alanyl moieties that are N-acyl substituents of D-alanine.. The chain is Peptidoglycan D,D-transpeptidase FtsI homolog (ftsI) from Nephroselmis olivacea (Green alga).